A 294-amino-acid chain; its full sequence is 4-diphosphocytidyl-2-C-methyl-D-erythritol kinase (294 aa).

Residue K19 is part of the active site. 106–116 (PVASGIGGGSA) contacts ATP. The active site involves D148.

This sequence belongs to the GHMP kinase family. IspE subfamily.

It carries out the reaction 4-CDP-2-C-methyl-D-erythritol + ATP = 4-CDP-2-C-methyl-D-erythritol 2-phosphate + ADP + H(+). The protein operates within isoprenoid biosynthesis; isopentenyl diphosphate biosynthesis via DXP pathway; isopentenyl diphosphate from 1-deoxy-D-xylulose 5-phosphate: step 3/6. Catalyzes the phosphorylation of the position 2 hydroxy group of 4-diphosphocytidyl-2C-methyl-D-erythritol. In Rhizobium etli (strain ATCC 51251 / DSM 11541 / JCM 21823 / NBRC 15573 / CFN 42), this protein is 4-diphosphocytidyl-2-C-methyl-D-erythritol kinase.